The primary structure comprises 726 residues: Putative RNA polymerase II subunit B1 CTD phosphatase RPAP2 homolog (726 aa).

The RTR1-type zinc-finger motif lies at 43–131 (AAASLLSGPD…LPPDRPFGVS (89 aa)). The Zn(2+) site is built by C66, C71, C107, and C111. Residues 209–218 (VGGPKKEAKQ) are compositionally biased toward basic and acidic residues. Disordered stretches follow at residues 209–242 (VGGP…SGES) and 294–323 (KKDK…GRDG). A compositionally biased stretch (polar residues) spans 220-241 (DACSAEQSSNINVDSRNASSGE).

It belongs to the RPAP2 family.

The protein resides in the nucleus. The enzyme catalyses O-phospho-L-seryl-[protein] + H2O = L-seryl-[protein] + phosphate. It catalyses the reaction O-phospho-L-threonyl-[protein] + H2O = L-threonyl-[protein] + phosphate. Functionally, putative RNA polymerase II subunit B1 C-terminal domain (CTD) phosphatase involved in RNA polymerase II transcription regulation. In Oryza sativa subsp. japonica (Rice), this protein is Putative RNA polymerase II subunit B1 CTD phosphatase RPAP2 homolog.